Reading from the N-terminus, the 342-residue chain is D-alanine--D-alanine ligase (342 aa).

An ATP-grasp domain is found at 132–326 (KLYAKECGIE…VAKHLPKSKN (195 aa)). 159-210 (EYPVIIKPNHLGSSIGVSVVYDSSELEYALDVAFEFDDEVLIEPFIEGIEEY) serves as a coordination point for ATP. Residues Asp-282, Glu-294, and Asn-296 each contribute to the Mg(2+) site.

Belongs to the D-alanine--D-alanine ligase family. It depends on Mg(2+) as a cofactor. Mn(2+) serves as cofactor.

It is found in the cytoplasm. The enzyme catalyses 2 D-alanine + ATP = D-alanyl-D-alanine + ADP + phosphate + H(+). It functions in the pathway cell wall biogenesis; peptidoglycan biosynthesis. Its function is as follows. Cell wall formation. This chain is D-alanine--D-alanine ligase, found in Nitratiruptor sp. (strain SB155-2).